We begin with the raw amino-acid sequence, 104 residues long: Type IV secretion system protein PtlB homolog (104 aa).

The chain crosses the membrane as a helical span at residues 30-50 (IALLGIWFSIAFLALFPVALL).

This sequence belongs to the virB3 family.

The protein resides in the cell membrane. The sequence is that of Type IV secretion system protein PtlB homolog (ptlB) from Bordetella parapertussis (strain 12822 / ATCC BAA-587 / NCTC 13253).